A 519-amino-acid polypeptide reads, in one-letter code: Transmembrane protein 180 (519 aa).

Topologically, residues 1-11 (MGLDWPQAWLL) are extracellular. Residues 12-43 (GLPIAVVYGSLALFTSILHNVFLLYYVDTFVS) form a helical membrane-spanning segment. At 44 to 55 (VYKINKVSFWVG) the chain is on the cytoplasmic side. Residues 56–74 (ETVFLLWNSFNDPLFGWLS) form a helical membrane-spanning segment. Over 75–100 (DRQLLSSQPRSGAGLSSRDVVLTRVR) the chain is Extracellular. Residues 101 to 118 (ALGWHGPLLALSFLAFWV) traverse the membrane as a helical segment. Residues 119-126 (PWAPAGLQ) are Cytoplasmic-facing. The chain crosses the membrane as a helical span at residues 127 to 151 (FLLCLCLYDGFLTLVDLHHHALLAD). At 152–155 (LALS) the chain is on the extracellular side. A helical transmembrane segment spans residues 156–179 (SHDRTHLNFYCSLFSAAGSLSVFA). Residues 180-191 (SYAFWNKEDFSS) lie on the Cytoplasmic side of the membrane. A helical membrane pass occupies residues 192–223 (FRAFCVVLAAGSGLGFLGTTQLLKRQIEATRR). Residues 224–264 (DRGCPGLDLDGGVCEEEPPVGGEEAGNITLGQYLRQLARHQ) are Extracellular-facing. An N-linked (GlcNAc...) asparagine glycan is attached at N250. A helical transmembrane segment spans residues 265 to 292 (NFLWFVGMDLVQVFHCHFNSNFFPLFLE). Residues 293-305 (HLLSDHISLSTGS) are Cytoplasmic-facing. Residues 306 to 325 (FLLGISYVAPHLNNLYFLPL) traverse the membrane as a helical segment. At 326 to 330 (CRRWG) the chain is on the extracellular side. A helical transmembrane segment spans residues 331-350 (VYAVVRGLFLLKLSLSLLML). Residues 351–358 (LAGPDHPG) lie on the Cytoplasmic side of the membrane. Residues 359-393 (LLCFFIASNRVFTEGTCKLLTLVVTDLVDEDLVLN) traverse the membrane as a helical segment. Residues 394 to 402 (HRKQAASAL) are Extracellular-facing. Residues 403–429 (LFGMVALVTKPGQTFAPLLGTWLLCFY) form a helical membrane-spanning segment. Over 430–468 (TGHDLFQQSPMTPVGSVRPWPELPAPAPAPAQAPTLRQG) the chain is Cytoplasmic. Residues 469–487 (CFYLLVFVPITCALLQLFT) traverse the membrane as a helical segment. Residues 488–519 (WSQFTLHGRRLRTVKAQRQNLAQIHTLNIKMV) are Extracellular-facing.

The protein resides in the cell membrane. The chain is Transmembrane protein 180 from Mus musculus (Mouse).